A 934-amino-acid polypeptide reads, in one-letter code: Progesterone receptor (934 aa).

The tract at residues 1–49 (MTELKSKGPRAPHVAGGPPSPEVGSPLLCRPAAGPFQGSQTSDTLPEVS) is disordered. The segment at 1 to 164 (MTELKSKGPR…PATQRVLSPL (164 aa)) is AF3; mediates transcriptional activation. The modulating, Pro-Rich stretch occupies residues 1–567 (MTELKSKGPR…YSFESLPQKI (567 aa)). S20 is modified (phosphoserine). Positions 55–59 (LDGLL) match the LXXL motif 1 motif. The disordered stretch occupies residues 61–239 (PRLCQGQDPP…EDSAGPLLKG (179 aa)). S81 bears the Phosphoserine mark. Residues 115 to 119 (LDTLL) carry the LXXL motif 2 motif. S130 and S162 each carry phosphoserine. The segment at 165–305 (MSRSGGKTED…LATTMMDFIH (141 aa)) is mediates transcriptional transrepression. Residues 183 to 187 (KVLPR) carry the Nuclear localization signal motif. Residue S190 is modified to Phosphoserine. The segment covering 191-203 (PSRQLLLPTSGSP) has biased composition (polar residues). S213 carries the phosphoserine modification. Over residues 220–231 (EVEEEDGSESED) the composition is skewed to acidic residues. S294 is modified (phosphoserine; by MAPK1). The disordered stretch occupies residues 331–375 (GGAGAASAFAPPQSSPSASSTPVAVGDFPDCAYPPDAEPKDNAYP). Residues 335–350 (AASAFAPPQSSPSASS) are compositionally biased toward low complexity. S345 carries the phosphoserine; by MAPK modification. A Glycyl lysine isopeptide (Lys-Gly) (interchain with G-Cter in SUMO); alternate cross-link involves residue K388. K388 participates in a covalent cross-link: Glycyl lysine isopeptide (Lys-Gly) (interchain with G-Cter in ubiquitin); alternate. S400 is modified (phosphoserine; by CDK2). Positions 415-454 (PDFPLGPPPQLPPRAPPSRPGEAAVTAAPASASVSSASSP) are disordered. Residues 418–433 (PLGPPPQLPPRAPPSR) show a composition bias toward pro residues. Residues 434-454 (PGEAAVTAAPASASVSSASSP) are compositionally biased toward low complexity. Residues 456-547 (STLECILYKA…VYPPYLNYLR (92 aa)) form an AF1; mediates transcriptional activation region. A Glycyl lysine isopeptide (Lys-Gly) (interchain with G-Cter in SUMO) cross-link involves residue K532. 2 NR C4-type zinc fingers span residues 568 to 588 (CLIC…CGSC) and 604 to 628 (CAGR…LRKC). A DNA-binding region (nuclear receptor) is located at residues 568-640 (CLICGDEASG…AGMVLGGRKF (73 aa)). S677 bears the Phosphoserine mark. One can recognise an NR LBD domain in the interval 680–914 (QDIQLIPPLI…EFPEMMSEVI (235 aa)). The segment at 688-934 (LIKLLMSIEP…MVKPLLFHKK (247 aa)) is AF2; mediates transcriptional activation. R767 serves as a coordination point for progesterone.

The protein belongs to the nuclear hormone receptor family. Interacts with SMARD1 and UNC45A. Interacts with CUEDC2; the interaction promotes ubiquitination, decreases sumoylation, and represses transcriptional activity. Interacts with PIAS3; the interaction promotes sumoylation of PR in a hormone-dependent manner, inhibits DNA-binding, and alters nuclear export. Interacts with SP1; the interaction requires ligand-induced phosphorylation on Ser-345 by ERK1/2-MAPK. Interacts with PRMT2. Interacts with NCOA2 and NCOA1. Interacts with KLF9. Interacts with GTF2B. In terms of processing, phosphorylated on multiple serine sites. Several of these sites are hormone-dependent. Phosphorylation on Ser-294 is highly hormone-dependent and modulates ubiquitination and sumoylation on Lys-388. Phosphorylation on Ser-345 also requires induction by hormone. Basal phosphorylation on Ser-81, Ser-162, Ser-190 and Ser-400 is increased in response to progesterone and can be phosphorylated in vitro by the CDK2-A1 complex. Increased levels of phosphorylation on Ser-400 also in the presence of EGF, heregulin, IGF, PMA and FBS. Phosphorylation at this site by CDK2 is ligand-independent, and increases nuclear translocation and transcriptional activity. Phosphorylation at Ser-162 and Ser-294, but not at Ser-190, is impaired during the G(2)/M phase of the cell cycle. Phosphorylation on Ser-345 by ERK1/2 MAPK is required for interaction with SP1. Post-translationally, sumoylation is hormone-dependent and represses transcriptional activity. Sumoylation on all three sites is enhanced by PIAS3. Desumoylated by SENP1. Sumoylation on Lys-388, the main site of sumoylation, is repressed by ubiquitination on the same site, and modulated by phosphorylation at Ser-294. Ubiquitination is hormone-dependent and represses sumoylation on the same site. Promoted by MAPK-mediated phosphorylation on Ser-294. Ubiquitinated by UBR5, leading to its degradation: UBR5 specifically recognizes and binds ligand-bound PGR when it is not associated with coactivators (NCOAs). In presence of NCOAs, the UBR5-degron is not accessible, preventing its ubiquitination and degradation. In terms of processing, palmitoylated by ZDHHC7 and ZDHHC21. Palmitoylation is required for plasma membrane targeting and for rapid intracellular signaling via ERK and AKT kinases and cAMP generation.

The protein resides in the nucleus. Its subcellular location is the cytoplasm. In terms of biological role, the steroid hormones and their receptors are involved in the regulation of eukaryotic gene expression and affect cellular proliferation and differentiation in target tissues. Transcriptional activator of several progesteron-dependent promoters in a variety of cell types. Involved in activation of SRC-dependent MAPK signaling on hormone stimulation. This is Progesterone receptor (PGR) from Colobus guereza (Mantled guereza).